The chain runs to 215 residues: ATP-dependent dethiobiotin synthetase BioD (215 aa).

13–18 serves as a coordination point for ATP; the sequence is DIGKTV. Thr-17 contacts Mg(2+). Lys-38 is an active-site residue. Thr-42 is a binding site for substrate. ATP contacts are provided by residues Asp-50, 115-118, and 175-176; these read EGAG and NH. Asp-50 and Glu-115 together coordinate Mg(2+).

This sequence belongs to the dethiobiotin synthetase family. Homodimer. Requires Mg(2+) as cofactor.

Its subcellular location is the cytoplasm. It carries out the reaction (7R,8S)-7,8-diammoniononanoate + CO2 + ATP = (4R,5S)-dethiobiotin + ADP + phosphate + 3 H(+). Its pathway is cofactor biosynthesis; biotin biosynthesis; biotin from 7,8-diaminononanoate: step 1/2. Its function is as follows. Catalyzes a mechanistically unusual reaction, the ATP-dependent insertion of CO2 between the N7 and N8 nitrogen atoms of 7,8-diaminopelargonic acid (DAPA, also called 7,8-diammoniononanoate) to form a ureido ring. The polypeptide is ATP-dependent dethiobiotin synthetase BioD (Neisseria meningitidis serogroup C / serotype 2a (strain ATCC 700532 / DSM 15464 / FAM18)).